The sequence spans 413 residues: Arogenate dehydratase/prephenate dehydratase 6, chloroplastic (413 aa).

The transit peptide at 1–44 directs the protein to the chloroplast; the sequence is MKALSSSSPILGASQPATATALIARSGRSEWQSSCAILTSKVIS. The 178-residue stretch at 117–294 folds into the Prephenate dehydratase domain; sequence RVAYQGVPGA…NVTRFVMLAR (178 aa). The ACT domain maps to 308–399; the sequence is SIVFAHEKGT…SFLRVLGSYP (92 aa).

As to expression, expressed in roots, leaves, stems, flowers and siliques.

The protein resides in the plastid. Its subcellular location is the chloroplast stroma. It carries out the reaction L-arogenate + H(+) = L-phenylalanine + CO2 + H2O. It catalyses the reaction prephenate + H(+) = 3-phenylpyruvate + CO2 + H2O. It functions in the pathway amino-acid biosynthesis; L-phenylalanine biosynthesis; L-phenylalanine from L-arogenate: step 1/1. Its pathway is amino-acid biosynthesis; L-phenylalanine biosynthesis; phenylpyruvate from prephenate: step 1/1. Converts the prephenate produced from the shikimate-chorismate pathway into phenylalanine. Dehydratase that uses arogenate and prephenate as substrates. Utilzes more efficiently arogenate than prephenate. This is Arogenate dehydratase/prephenate dehydratase 6, chloroplastic from Arabidopsis thaliana (Mouse-ear cress).